A 301-amino-acid chain; its full sequence is MKLAILSRNSKLYSTRRLVEVARMRGHTVRILDPLRCYMRIVVGDFSMHYKGKPIDGYHAVIPRIGVSVTHYATAVLRQFELMGTYSPNPSDAILRSRDKLRAHQLLAAQGIDMPMTVFGDNPDDTQDLLSMLGPPPHVVKLNEGAQGKGVILSEKNSASRGLVEALRGLYANFLVQEFISEADSADLRCFVVGNQVVATMRRQAADGDFRSNLHLGGSATAATASEEEQEVAVRSAHALGLTVAGVDLIRSRRGPLVLEVNPTPGLEGIEATSGTNVAIKIVHHVEEMLATICSSNICQP.

An ATP-grasp domain is found at 104 to 287; the sequence is HQLLAAQGID…VAIKIVHHVE (184 aa). Residues Lys141, 178 to 179, Asp187, and 211 to 213 each bind ATP; these read EF and RSN. Mg(2+) contacts are provided by Asp248, Glu260, and Asn262. The Mn(2+) site is built by Asp248, Glu260, and Asn262.

This sequence belongs to the RimK family. Requires Mg(2+) as cofactor. It depends on Mn(2+) as a cofactor.

The chain is Probable alpha-L-glutamate ligase from Xylella fastidiosa (strain M12).